The sequence spans 316 residues: Phospholipase A1 3 (316 aa).

The first 4 residues, 1–4 (ADDL), serve as a signal peptide directing secretion. The propeptide occupies 5 to 14 (TTLRNGTLDR). Cys20 and Cys103 are disulfide-bonded. The active-site Nucleophile is the Ser153. The Charge relay system role is filled by Asp181. Cystine bridges form between Cys192–Cys197 and Cys235–Cys240. Catalysis depends on His242, which acts as the Charge relay system. 3 disulfide bridges follow: Cys257-Cys284, Cys258-Cys309, and Cys277-Cys282.

Belongs to the AB hydrolase superfamily. Lipase family. As to expression, expressed by the venom gland.

It is found in the secreted. It catalyses the reaction a 1,2-diacyl-sn-glycero-3-phosphocholine + H2O = a 2-acyl-sn-glycero-3-phosphocholine + a fatty acid + H(+). In terms of biological role, catalyzes the hydrolysis of phosphatidylcholine with phospholipase A1 activity. May act as an allergen and induce hemolytic activity. In Polistes dominula (European paper wasp), this protein is Phospholipase A1 3.